Reading from the N-terminus, the 581-residue chain is Protein ORF B (581 aa).

The chain is Protein ORF B from Elephas maximus (Indian elephant).